The following is a 593-amino-acid chain: Zinc metalloproteinase-disintegrin-like kaouthiagin-like (593 aa).

Positions 1–20 (MIQALLVIICLAVFPHQGSS) are cleaved as a signal peptide. A propeptide spanning residues 21-196 (IILESGNVND…KTSQFTNTPE (176 aa)) is cleaved from the precursor. In terms of domain architecture, Peptidase M12B spans 205–400 (KYIEFYVIVD…DRPQCILNKP (196 aa)). Residues glutamate 208 and aspartate 292 each contribute to the Ca(2+) site. Disulfide bonds link cysteine 316–cysteine 395, cysteine 356–cysteine 379, and cysteine 358–cysteine 363. An N-linked (GlcNAc...) asparagine glycan is attached at asparagine 319. 3 residues coordinate Zn(2+): histidine 341, histidine 345, and histidine 351. Ca(2+)-binding residues include cysteine 395, asparagine 398, isoleucine 410, asparagine 413, phenylalanine 415, glutamate 417, glutamate 420, and aspartate 423. Positions 408-477 (PPICGNYFVE…ECPTDSLQRN (70 aa)) constitute a Disintegrin domain. Disulfide bonds link cysteine 411-cysteine 440, cysteine 422-cysteine 435, cysteine 424-cysteine 430, cysteine 434-cysteine 462, cysteine 449-cysteine 469, cysteine 456-cysteine 488, cysteine 481-cysteine 493, cysteine 500-cysteine 550, cysteine 515-cysteine 558, cysteine 528-cysteine 538, cysteine 545-cysteine 581, and cysteine 575-cysteine 586. A D/ECD-tripeptide motif is present at residues 455–457 (DCD). Ca(2+)-binding residues include aspartate 457, leucine 458, glutamate 460, aspartate 472, and serine 473. Asparagine 490 carries N-linked (GlcNAc...) asparagine glycosylation.

This sequence belongs to the venom metalloproteinase (M12B) family. P-III subfamily. P-IIIa sub-subfamily. As to quaternary structure, monomer. Zn(2+) serves as cofactor. Expressed by the venom gland.

It is found in the secreted. Its function is as follows. Snake venom zinc metalloproteinase that cleaves the membrane-bound precursor of TNF-alpha (TNF) into its mature soluble form showing the same digestion pattern than ADAM17. This chain is Zinc metalloproteinase-disintegrin-like kaouthiagin-like, found in Naja atra (Chinese cobra).